The following is a 1879-amino-acid chain: Genome polyprotein (1879 aa).

The tract at residues 37–98 (GPLDHDSRHG…TSTDVVRSGP (62 aa)) is disordered. The span at 38–50 (PLDHDSRHGRDPV) shows a compositional bias: basic and acidic residues. A compositionally biased stretch (polar residues) spans 79–93 (SGTNPSHLKPTSTDV). Residues 564 to 720 (DNVISCCTRR…ENWKRENPGK (157 aa)) form the SF3 helicase domain. Residue 590–597 (GPPGCGKT) coordinates ATP. At Tyr1093 the chain carries O-(5'-phospho-RNA)-tyrosine. The 154-residue stretch at 1188–1341 (GVTHKNAIVS…KLIVPYVKVD (154 aa)) folds into the Peptidase C24 domain. Active-site for 3CLpro activity residues include His1222, Glu1243, and Cys1305. The 126-residue stretch at 1591–1716 (HDRYCVDYSK…IVPPLISSVM (126 aa)) folds into the RdRp catalytic domain.

Homodimer. Interacts with NTPase, protein p30 and protease-polymerase p76. In terms of assembly, interacts with capsid protein VP1 and protease-polymerase p76. Interacts with host IEF4e; this interaction plays a role in translation of viral proteins. As to quaternary structure, homooligomer. Interacts with Vpg, protein p32 and may interact with capsid protein VP1. Post-translationally, specific enzymatic cleavages in vivo yield mature proteins. Pro-Pol is first autocatalytically cleaved, then processes the whole polyprotein. In terms of processing, VPg is uridylylated by the polymerase and is covalently attached to the 5'-end of the polyadenylated genomic and subgenomic RNAs. This uridylylated form acts as a nucleotide-peptide primer for the polymerase.

The protein localises to the host endoplasmic reticulum membrane. It carries out the reaction a ribonucleoside 5'-triphosphate + H2O = a ribonucleoside 5'-diphosphate + phosphate + H(+). The enzyme catalyses RNA(n) + a ribonucleoside 5'-triphosphate = RNA(n+1) + diphosphate. The catalysed reaction is Endopeptidase with a preference for cleavage when the P1 position is occupied by Glu-|-Xaa and the P1' position is occupied by Gly-|-Yaa.. Together with NTPase and NS4, initiates the formation of the replication complex. Induces the proliferation of the host smooth ER membranes forming long tubular structures. These remodeled membranes probably form the viral factories that contain the replication complex. In terms of biological role, displays NTPase activity, but no helicase activity. Induces the formation of convoluted membranes derived from the host ER. These remodeled membranes probably form the viral factories that contain the replication complex. Together with NS2 and NS4, initiates the formation of the replication complex. Functionally, probable key protein responsible for the formation of membrane alterations by the virus. Induces the formation of convoluted membranes derived from the host ER. These remodeled membranes probably form the viral factories that contain the replication complex. Together with NS2 and NTPase, initiates the formation of the replication complex. Its function is as follows. Viral genome-linked protein is covalently linked to the 5'-end of the positive-strand, negative-strand genomic RNAs and subgenomic RNA. Acts as a genome-linked replication primer. May recruit ribosome to viral RNA thereby promoting viral proteins translation. Interacts with host translation initiation complex to allow the translation of viral proteins. Protease-polymerase p76 processes the polyprotein: Pro-Pol is first released by autocleavage, then all other proteins are cleaved. Cleaves host translation initiation factor eIF4G1, eIF4G2 and PABP1 thereby inducing a shutdown of host protein synthesis. This shutdown may not prevent viral mRNA from being translated since viral Vpg replaces the cap. Also functions as an RNA-directed RNA polymerase, which replicates genomic and antigenomic viral RNA by recognizing specific signals. Also transcribes a subgenomic mRNA by initiating RNA synthesis internally on antigenomic RNA. This sgRNA codes for structural proteins. Catalyzes the covalent attachment VPg with viral RNAs. The protein is Genome polyprotein of Otariidae (fur seals &amp; sea lions).